The chain runs to 352 residues: Photosystem II D2 protein (352 aa).

Thr-2 is subject to N-acetylthreonine. Position 2 is a phosphothreonine (Thr-2). The chain crosses the membrane as a helical span at residues Cys-40–Thr-60. His-117 contributes to the chlorophyll a binding site. A helical membrane pass occupies residues Gly-124 to Pro-140. Residues Gln-129 and Asn-142 each coordinate pheophytin a. A helical transmembrane segment spans residues Val-152–Ser-165. His-197 serves as a coordination point for chlorophyll a. A helical transmembrane segment spans residues Ala-207–Asp-227. Residues His-214 and Phe-261 each coordinate a plastoquinone. A Fe cation-binding site is contributed by His-214. Fe cation is bound at residue His-268. The helical transmembrane segment at Gly-278–Arg-294 threads the bilayer.

It belongs to the reaction center PufL/M/PsbA/D family. PSII is composed of 1 copy each of membrane proteins PsbA, PsbB, PsbC, PsbD, PsbE, PsbF, PsbH, PsbI, PsbJ, PsbK, PsbL, PsbM, PsbT, PsbX, PsbY, PsbZ, Psb30/Ycf12, at least 3 peripheral proteins of the oxygen-evolving complex and a large number of cofactors. It forms dimeric complexes. It depends on The D1/D2 heterodimer binds P680, chlorophylls that are the primary electron donor of PSII, and subsequent electron acceptors. It shares a non-heme iron and each subunit binds pheophytin, quinone, additional chlorophylls, carotenoids and lipids. There is also a Cl(-1) ion associated with D1 and D2, which is required for oxygen evolution. The PSII complex binds additional chlorophylls, carotenoids and specific lipids. as a cofactor.

It localises to the plastid. The protein resides in the chloroplast thylakoid membrane. It catalyses the reaction 2 a plastoquinone + 4 hnu + 2 H2O = 2 a plastoquinol + O2. In terms of biological role, photosystem II (PSII) is a light-driven water:plastoquinone oxidoreductase that uses light energy to abstract electrons from H(2)O, generating O(2) and a proton gradient subsequently used for ATP formation. It consists of a core antenna complex that captures photons, and an electron transfer chain that converts photonic excitation into a charge separation. The D1/D2 (PsbA/PsbD) reaction center heterodimer binds P680, the primary electron donor of PSII as well as several subsequent electron acceptors. D2 is needed for assembly of a stable PSII complex. The protein is Photosystem II D2 protein of Ostreococcus tauri.